A 430-amino-acid chain; its full sequence is Nitroalkane oxidase (430 aa).

Residues 132-135 (LVFS), 140-142 (VAN), 170-172 (WAT), Arg-301, Gln-311, 372-376 (NAVGI), and 397-401 (IFDGG) contribute to the FAD site. Residue Asp-399 is the Proton acceptor of the active site.

This sequence belongs to the acyl-CoA dehydrogenase family. In terms of assembly, homotetramer. FAD serves as cofactor.

It carries out the reaction a primary nitroalkane + O2 + H2O = an aldehyde + nitrite + H2O2 + H(+). The enzyme catalyses a secondary nitroalkane + O2 + H2O = a ketone + nitrite + H2O2 + H(+). In terms of biological role, nitroalkane oxidase (NAO) catalyzes the oxidation of nitroalkanes to the corresponding aldehydes or ketones with the release of nitrite and the consumption of molecular oxygen to yield hydrogen peroxide. NAO is unusual, since it catalyzes substrate oxidation by removing a substrate proton to form a carbanion intermediate. Prefers longer nitroalkanes, with 1-nitrohexane having the highest activity. The protein is Nitroalkane oxidase of Podospora anserina (strain S / ATCC MYA-4624 / DSM 980 / FGSC 10383) (Pleurage anserina).